The primary structure comprises 289 residues: Rhodopsin (289 aa).

The Extracellular segment spans residues 1 to 7; it reads YLVSPAA. The chain crosses the membrane as a helical span at residues 8-32; the sequence is YAALGAYMFLLILIGFPVNFLTLYV. Residues 33-44 lie on the Cytoplasmic side of the membrane; sequence TLEHKKLRTPLN. A helical membrane pass occupies residues 45–67; the sequence is YILLNLAVADLFMVLGGFTTTMY. The Extracellular portion of the chain corresponds to 68–81; the sequence is TSMHGYFVLGRLGC. Cys-81 and Cys-158 form a disulfide bridge. Residues 82 to 104 traverse the membrane as a helical segment; that stretch reads NLEGFFATLGGEIALWSLVVLAI. The 'Ionic lock' involved in activated form stabilization motif lies at 105 to 107; the sequence is ERW. Residues 105–123 are Cytoplasmic-facing; it reads ERWIVVCKPISNFRFTEDN. The chain crosses the membrane as a helical span at residues 124–144; that stretch reads AIMGLAFSWVMALTCAVPPLV. At 145 to 173 the chain is on the extracellular side; it reads GWSRYIPEGMQCSCGVDYYTRAEGFNNES. Residue Asn-171 is glycosylated (N-linked (GlcNAc...) asparagine). Residues 174–195 form a helical membrane-spanning segment; that stretch reads FVIYMFIVHFPIPLSVIFFCYG. Residues 196–223 are Cytoplasmic-facing; the sequence is RLLCAVKEAAAAQQESETTQRAEKEVSR. Residues 224 to 245 form a helical membrane-spanning segment; it reads MVVILVIGFLVCWLPYASVAWW. The Extracellular portion of the chain corresponds to 246–257; it reads IFCNQGSDFGPI. A helical membrane pass occupies residues 258-279; the sequence is FMTLPSFFAKRPAIYNPMIYIC. Position 267 is an N6-(retinylidene)lysine (Lys-267). The Cytoplasmic segment spans residues 280–289; that stretch reads MNKQFRHCMI.

This sequence belongs to the G-protein coupled receptor 1 family. Opsin subfamily. Post-translationally, phosphorylated on some or all of the serine and threonine residues present in the C-terminal region. In terms of processing, contains one covalently linked retinal chromophore.

The protein resides in the membrane. It is found in the cell projection. Its subcellular location is the cilium. It localises to the photoreceptor outer segment. Its function is as follows. Photoreceptor required for image-forming vision at low light intensity. While most salt water fish species use retinal as chromophore, most freshwater fish use 3-dehydroretinal, or a mixture of retinal and 3-dehydroretinal. Light-induced isomerization of 11-cis to all-trans retinal triggers a conformational change that activates signaling via G-proteins. Subsequent receptor phosphorylation mediates displacement of the bound G-protein alpha subunit by arrestin and terminates signaling. The polypeptide is Rhodopsin (rho) (Batrachocottus multiradiatus (Baikal sculpin)).